We begin with the raw amino-acid sequence, 400 residues long: Chorismate synthase (400 aa).

Arginine 40 and arginine 46 together coordinate NADP(+). FMN-binding positions include 135-137, 257-258, glycine 301, 316-320, and arginine 342; these read RAS, QA, and KPIST.

It belongs to the chorismate synthase family. As to quaternary structure, homotetramer. FMNH2 serves as cofactor.

It carries out the reaction 5-O-(1-carboxyvinyl)-3-phosphoshikimate = chorismate + phosphate. The protein operates within metabolic intermediate biosynthesis; chorismate biosynthesis; chorismate from D-erythrose 4-phosphate and phosphoenolpyruvate: step 7/7. Its function is as follows. Catalyzes the anti-1,4-elimination of the C-3 phosphate and the C-6 proR hydrogen from 5-enolpyruvylshikimate-3-phosphate (EPSP) to yield chorismate, which is the branch point compound that serves as the starting substrate for the three terminal pathways of aromatic amino acid biosynthesis. This reaction introduces a second double bond into the aromatic ring system. The chain is Chorismate synthase from Tropheryma whipplei (strain TW08/27) (Whipple's bacillus).